A 168-amino-acid polypeptide reads, in one-letter code: 6,7-dimethyl-8-ribityllumazine synthase (168 aa).

5-amino-6-(D-ribitylamino)uracil-binding positions include Phe24, 58–60, and 82–84; these read ALE and AVI. 87 to 88 is a binding site for (2S)-2-hydroxy-3-oxobutyl phosphate; sequence ET. The Proton donor role is filled by His90. Asn115 contacts 5-amino-6-(D-ribitylamino)uracil. (2S)-2-hydroxy-3-oxobutyl phosphate is bound at residue Arg129.

The protein belongs to the DMRL synthase family.

It carries out the reaction (2S)-2-hydroxy-3-oxobutyl phosphate + 5-amino-6-(D-ribitylamino)uracil = 6,7-dimethyl-8-(1-D-ribityl)lumazine + phosphate + 2 H2O + H(+). Its pathway is cofactor biosynthesis; riboflavin biosynthesis; riboflavin from 2-hydroxy-3-oxobutyl phosphate and 5-amino-6-(D-ribitylamino)uracil: step 1/2. Catalyzes the formation of 6,7-dimethyl-8-ribityllumazine by condensation of 5-amino-6-(D-ribitylamino)uracil with 3,4-dihydroxy-2-butanone 4-phosphate. This is the penultimate step in the biosynthesis of riboflavin. The sequence is that of 6,7-dimethyl-8-ribityllumazine synthase from Paraburkholderia xenovorans (strain LB400).